A 108-amino-acid chain; its full sequence is DNA-binding protein HBbu (108 aa).

Belongs to the bacterial histone-like protein family.

Functionally, histone-like DNA-binding protein which is capable of wrapping DNA to stabilize it, and thus to prevent its denaturation under extreme environmental conditions. The sequence is that of DNA-binding protein HBbu (hbb) from Borrelia turicatae.